The sequence spans 462 residues: Glycerol-3-phosphate acyltransferase ATS12, chloroplastic (462 aa).

The transit peptide at 1–82 directs the protein to the chloroplast; the sequence is MFILSSSSST…DKESAQSAAT (82 aa). Residues 233–238 carry the HXXXXD motif motif; the sequence is HQTEAD.

This sequence belongs to the GPAT/DAPAT family.

It localises to the plastid. The protein localises to the chloroplast stroma. The catalysed reaction is a fatty acyl-[ACP] + sn-glycerol 3-phosphate = a 1-acyl-sn-glycero-3-phosphate + holo-[ACP]. It catalyses the reaction sn-glycerol 3-phosphate + an acyl-CoA = a 1-acyl-sn-glycero-3-phosphate + CoA. The protein operates within phospholipid metabolism; CDP-diacylglycerol biosynthesis; CDP-diacylglycerol from sn-glycerol 3-phosphate: step 1/3. Esterifies the acyl-group from acyl-acyl carrier proteins (acyl-ACPs) to the sn-1 position of glycerol-3-phosphate. The physiological acyl donors in chloroplasts are acyl-ACPs, but acyl-CoAs are used as artificial donor for in vitro reactions. The enzyme from chilling-resistant plants discriminates against non-fluid palmitic acid and selects oleic acid whereas the enzyme from sensitive plants accepts both fatty acids. Squash is chilling-sensitive. Does not seem to discriminate between the acyl-ACP thioesters 18:1-ACP, 18:0-ACP and 16:0-ACP. Exhibits higher selectivity for 16:0-CoA than 18:1-CoA in vitro. This is Glycerol-3-phosphate acyltransferase ATS12, chloroplastic from Cucurbita moschata (Winter crookneck squash).